A 116-amino-acid chain; its full sequence is Cation channel sperm-associated auxiliary subunit TMEM262 (116 aa).

Residues 1-16 (MWLQDRIATFFFPKGM) are Cytoplasmic-facing. Residues 17 to 38 (MLTTAALMLFFLHLGIFIRDVH) form a helical membrane-spanning segment. Over 39–51 (NFCITYHYDHMSF) the chain is Extracellular. Residues 52 to 72 (HYTVVLMFSQVISICWAAMGS) form a helical membrane-spanning segment. The Cytoplasmic segment spans residues 73 to 84 (LYAEMTENKYVC). The helical transmembrane segment at 85–107 (FSALTILMLNGAMFFNRLSLEFL) threads the bilayer. Topologically, residues 108-116 (AIEYREEHH) are extracellular.

As to quaternary structure, component of the CatSper complex or CatSpermasome composed of the core pore-forming members CATSPER1, CATSPER2, CATSPER3 and CATSPER4 as well as auxiliary members CATSPERB, CATSPERG, CATSPERD, CATSPERE, CATSPERZ, C2CD6/CATSPERT, TMEM249, TMEM262 and EFCAB9. HSPA1 may be an additional auxiliary complex member. The core complex members CATSPER1, CATSPER2, CATSPER3 and CATSPER4 form a heterotetrameric channel. The auxiliary CATSPERB, CATSPERG, CATSPERD and CATSPERE subunits form a pavilion-like structure over the pore which stabilizes the complex through interactions with CATSPER4, CATSPER3, CATSPER1 and CATSPER2 respectively. TMEM262/CATSPERH interacts with CATSPERB, further stabilizing the complex. C2CD6/CATSPERT interacts at least with CATSPERD and is required for targeting the CatSper complex in the flagellar membrane.

It localises to the cell projection. Its subcellular location is the cilium. The protein resides in the flagellum membrane. Its function is as follows. Auxiliary component of the CatSper complex, a complex involved in sperm cell hyperactivation. The chain is Cation channel sperm-associated auxiliary subunit TMEM262 from Homo sapiens (Human).